The following is a 379-amino-acid chain: Cytochrome b (379 aa).

4 consecutive transmembrane segments (helical) span residues 33–53, 77–98, 113–133, and 178–198; these read FGSL…FLAM, WLIR…YLHI, WNIG…GYVL, and FFAF…IHFF. Heme b contacts are provided by His-83 and His-97. The heme b site is built by His-182 and His-196. His-201 is an a ubiquinone binding site. 4 helical membrane passes run 226-246, 288-308, 320-340, and 347-367; these read IKDI…VLFS, LGGV…PMLH, FSQC…WIGG, and YITI…IVSR.

Belongs to the cytochrome b family. In terms of assembly, the cytochrome bc1 complex contains 11 subunits: 3 respiratory subunits (MT-CYB, CYC1 and UQCRFS1), 2 core proteins (UQCRC1 and UQCRC2) and 6 low-molecular weight proteins (UQCRH/QCR6, UQCRB/QCR7, UQCRQ/QCR8, UQCR10/QCR9, UQCR11/QCR10 and a cleavage product of UQCRFS1). This cytochrome bc1 complex then forms a dimer. The cofactor is heme b.

Its subcellular location is the mitochondrion inner membrane. Component of the ubiquinol-cytochrome c reductase complex (complex III or cytochrome b-c1 complex) that is part of the mitochondrial respiratory chain. The b-c1 complex mediates electron transfer from ubiquinol to cytochrome c. Contributes to the generation of a proton gradient across the mitochondrial membrane that is then used for ATP synthesis. The protein is Cytochrome b (MT-CYB) of Dolichotis patagonum (Patagonian mara).